Reading from the N-terminus, the 614-residue chain is MCGITGWVDFKKQLVQEKQTMDRMTDTLSKRGPDDSNVWGEHHVLFGHKRLAVVDIEGGRQPMACTYKGDTYTIIYNGELYNTEDLRKELRARGHQFERTSDTEVLLHSYIEWQEDCVDHLNGIFAFAVWDEKRNLLFAARDRLGVKPFFYTKEGSSFLFGSEIKAILAHPDIKARVDRTGLSEIFGLGPSRTPGTGIFKGIKEIRPAHALTFSKDGLNIWRYWNVESEKHTDSFDDTVANVRSLFQDAVTRQLVSDVPVCTFLSGGLDSSAITAIAAGHFEKEGKAPLHTYSIDYEENDKYFQASAFQPNDDGPWIEKMTEAFGTTHHKCVISQKDLVDHLEEAVLVKDLPGMADVDSSLLWFCREIKKDFVVSLSGECADEIFGGYPWFHTADVESGFPWMRSTEERIKLLSDSWQKKLNLKEYVNAKYEETLAETPLLDGETGVDKARRQLFYLNMLWFMTNLLDRKDRMSMGASLEVRVPFADHRLVEYVWNIPWEMKMHDNREKGILRKALEGILPDDILYRKKSPYPKTHHPEYTKGVSEWLKTIRSQKDSVLHTLLDRKQLDQLLETEGSSFKVPWFGQLMKGPQLIAHLAQIHTWFEAYRIDIDER.

C2 functions as the For GATase activity in the catalytic mechanism. The Glutamine amidotransferase type-2 domain occupies 2-216 (CGITGWVDFK…PAHALTFSKD (215 aa)). L-glutamine-binding positions include 50–54 (RLAVV), 77–79 (NGE), and D102. 377-378 (SG) contacts ATP.

The protein belongs to the asparagine synthetase family.

It carries out the reaction L-aspartate + L-glutamine + ATP + H2O = L-asparagine + L-glutamate + AMP + diphosphate + H(+). The protein operates within amino-acid biosynthesis; L-asparagine biosynthesis; L-asparagine from L-aspartate (L-Gln route): step 1/1. In terms of biological role, asparagine synthetase involved in sporulation. The protein is Asparagine synthetase [glutamine-hydrolyzing] 3 (asnO) of Bacillus subtilis (strain 168).